The following is a 1117-amino-acid chain: Sodium-driven chloride bicarbonate exchanger (1117 aa).

The span at 1–14 (MQSGTCESFQSLSH) shows a compositional bias: polar residues. Disordered stretches follow at residues 1–26 (MQSG…VDRG), 57–94 (GRKS…FDTP), 244–312 (KQSE…PHQQ), and 456–475 (NGTA…GPEL). Over 1 to 508 (MQSGTCESFQ…DFTDALSLQC (508 aa)) the chain is Cytoplasmic. Residues 15–26 (QRNDEEAVVDRG) are compositionally biased toward basic and acidic residues. Positions 58-75 (RKSHRRHRHRGHKHRKRD) are enriched in basic residues. Residues 76–89 (RERDSGLEDGRESP) are compositionally biased toward basic and acidic residues. A Phosphoserine modification is found at Ser-88. Thr-93 is subject to Phosphothreonine. A compositionally biased stretch (polar residues) spans 247–263 (EPNSMDKNAGQVVSPQS). Ser-275 is subject to Phosphoserine. Residues 509-529 (LASFLFLYCACMSPVITFGGL) traverse the membrane as a helical segment. At 530-537 (LGEATEGR) the chain is on the extracellular side. A helical membrane pass occupies residues 538 to 558 (ISAIESLFGASMTGIAYSLFG). Residues 559 to 561 (GQP) lie on the Cytoplasmic side of the membrane. A helical membrane pass occupies residues 562–582 (LTILGSTGPVLVFEKILFKFC). Over 583–595 (KEYGLSYLSLRAS) the chain is Extracellular. A helical membrane pass occupies residues 596–616 (IGLWTATLCIILVATDASSLV). At 617 to 625 (CYITRFTEE) the chain is on the cytoplasmic side. A helical membrane pass occupies residues 626-646 (AFASLICIIFIYEALEKLFEL). The Extracellular segment spans residues 647–719 (SEAYPINMHN…VGRACGHEHP (73 aa)). Asn-673, Asn-676, Asn-686, and Asn-696 each carry an N-linked (GlcNAc...) asparagine glycan. A helical transmembrane segment spans residues 720–740 (YVPDVLFWSVILFFSTVTLSA). Residues 741–761 (TLKQFKTSRYFPTKVRSIVSD) are Cytoplasmic-facing. Residues 762 to 782 (FAVFLTILCMVLIDYAIGIPS) traverse the membrane as a helical segment. At 783–808 (PKLQVPSVFKPTRDDRGWFVTPLGPN) the chain is on the extracellular side. Residues 809 to 829 (PWWTVIAAIIPALLCTILIFM) traverse the membrane as a helical segment. Residues 830–854 (DQQITAVIINRKEHKLKKGCGYHLD) lie on the Cytoplasmic side of the membrane. A helical transmembrane segment spans residues 855 to 875 (LLMVAVMLGVCSIMGLPWFVA). Over 876 to 911 (ATVLSITHVNSLKLESECSAPGEQPKFLGIREQRVT) the chain is Extracellular. Residues 912–932 (GLMIFILMGSSVFMTSILKFI) form a helical membrane-spanning segment. At 933-934 (PM) the chain is on the cytoplasmic side. A helical transmembrane segment spans residues 935–955 (PVLYGVFLYMGASSLKGIQFF). Over 956 to 997 (DRIKLFWMPAKHQPDFIYLRHVPLRKVHLFTVIQMSCLGLLW) the chain is Extracellular. The helical transmembrane segment at 998-1018 (IIKVSRAAIVFPMMVLALVFV) threads the bilayer. The Cytoplasmic segment spans residues 1019 to 1117 (RKLMDFLFTK…SSFPSKSSPS (99 aa)). Residues Ser-1056 and Ser-1084 each carry the phosphoserine modification.

The protein belongs to the anion exchanger (TC 2.A.31) family. Post-translationally, N-glycosylated.

It is found in the basolateral cell membrane. The protein localises to the apical cell membrane. It localises to the cell projection. The protein resides in the dendrite. Its subcellular location is the axon. It is found in the perikaryon. The protein localises to the presynapse. It localises to the postsynapse. Its function is as follows. Sodium/bicarbonate cotransporter which plays an important role in regulating intracellular pH. Has been shown to act as a sodium/bicarbonate cotransporter in exchange for intracellular chloride. Has also been shown to act as a sodium/biocarbonate cotransporter which does not couple net influx of bicarbonate to net efflux of chloride, with the observed chloride efflux being due to chloride self-exchange. Controls neuronal pH and may contribute to the secretion of cerebrospinal fluid. Acting on presynaptic intracellular pH, it promotes GABA release, reduces the excitability of CA1 pyramidal neurons, and modulates short-term synaptic plasticity. Required in retinal cells to maintain normal pH which is necessary for normal vision. In the kidney, likely to mediate bicarbonate reclamation in the apical membrane of the proximal tubules. The protein is Sodium-driven chloride bicarbonate exchanger of Bos taurus (Bovine).